We begin with the raw amino-acid sequence, 369 residues long: Ribosomal RNA large subunit methyltransferase G (369 aa).

The protein belongs to the methyltransferase superfamily. RlmG family.

The protein localises to the cytoplasm. The enzyme catalyses guanosine(1835) in 23S rRNA + S-adenosyl-L-methionine = N(2)-methylguanosine(1835) in 23S rRNA + S-adenosyl-L-homocysteine + H(+). Its function is as follows. Specifically methylates the guanine in position 1835 (m2G1835) of 23S rRNA. In Magnetococcus marinus (strain ATCC BAA-1437 / JCM 17883 / MC-1), this protein is Ribosomal RNA large subunit methyltransferase G.